The chain runs to 961 residues: Mitogen-activated protein kinase kinase kinase 13-B (961 aa).

Positions 89–115 are disordered; sequence RDQDEPENTAPQGSSHSGDGGNNSANE. Low complexity predominate over residues 101–114; it reads GSSHSGDGGNNSAN. The region spanning 171–412 is the Protein kinase domain; that stretch reads ISELQWLGSG…FRQILMHLDI (242 aa). Residues 177 to 185 and K198 contribute to the ATP site; that span reads LGSGAQGAV. D282 serves as the catalytic Proton acceptor. 2 leucine-zipper regions span residues 436–457 and 489–510; these read VKKH…DEEL and LSSI…EQTV. Positions 460–497 form a coiled coil; that stretch reads RRREELRHALDIREHYERKLERANNLYMELSSIMLQLE. Disordered stretches follow at residues 507–644, 796–874, and 933–961; these read EQTV…ETSQ, TPPA…DVAC, and NAES…SSTW. The span at 563–580 shows a compositional bias: low complexity; sequence AEGSAASASPISGSPKTS. Residues 586 to 598 are compositionally biased toward basic residues; the sequence is GRYRSKPRHRRGN. Residues 613–628 show a composition bias toward low complexity; that stretch reads QESPAPSQQSSQHQTP. A compositionally biased stretch (acidic residues) spans 813–826; sequence DSSEGEEGEVDSEV. The segment at 814 to 827 is acidic; sequence SSEGEEGEVDSEVE. Polar residues predominate over residues 839-854; it reads STCQSYSTFSSENFSV. Acidic residues predominate over residues 934–945; it reads AESDCDSSEGEC. Residues 949–961 are compositionally biased toward polar residues; sequence TVRTNNPVNSSTW.

The protein belongs to the protein kinase superfamily. Ser/Thr protein kinase family.

The protein localises to the cytoplasm. The protein resides in the membrane. It carries out the reaction L-seryl-[protein] + ATP = O-phospho-L-seryl-[protein] + ADP + H(+). The enzyme catalyses L-threonyl-[protein] + ATP = O-phospho-L-threonyl-[protein] + ADP + H(+). In terms of biological role, may have a role in the JNK signaling pathway. In Xenopus laevis (African clawed frog), this protein is Mitogen-activated protein kinase kinase kinase 13-B (map3k13-b).